The primary structure comprises 974 residues: Valine--tRNA ligase, chloroplastic/mitochondrial 2 (974 aa).

A 'HIGH' region motif is present at residues 109–119; sequence PNVTGSLHMGH. The LRR 1 repeat unit spans residues 432–454; that stretch reads LAEKALLAVENKELTIIPERFEK. Positions 489–518 form a coiled coil; sequence EEDYIVAKSAEEALEKALEKYGKDVEIYQD. Residues 598 to 602 carry the 'KMSKS' region motif; it reads KMSKS. Lys601 is an ATP binding site. One copy of the LRR 2 repeat lies at 857 to 880; that stretch reads LALLSRLDLNNVHFSNAPPGDANL.

It belongs to the class-I aminoacyl-tRNA synthetase family.

The protein localises to the plastid. It is found in the chloroplast. It localises to the mitochondrion. The catalysed reaction is tRNA(Val) + L-valine + ATP = L-valyl-tRNA(Val) + AMP + diphosphate. In Arabidopsis thaliana (Mouse-ear cress), this protein is Valine--tRNA ligase, chloroplastic/mitochondrial 2.